Reading from the N-terminus, the 1040-residue chain is Chromatin modification-related protein rik1 (1040 aa).

This sequence belongs to the DDB1 family. Component of the Clr4 methyltransferase complex (ClrC) composed of at least clr4, rik1, pcu4, rbx1, raf1 and raf2. The cullin pcu4, rik1, raf1, raf2 and the ring-box protein rbx1 are components of an E3 ubiquitin ligase, whose activity is essential for heterochromatin assembly.

The protein localises to the nucleus. It localises to the cytoplasm. Its subcellular location is the cytoskeleton. It is found in the microtubule organizing center. The protein resides in the spindle pole body. The protein localises to the chromosome. Component of the Clr4 methyltransferase complex (ClrC) which contributes to the establishment of heterochromatin by specifically methylating histone H3 to form H3K9me. ClrC preferentially ubiquitylates H3K14 and ClrC-mediated H3 ubiquitination promotes clr4 methyltransferase activity for the methylation of H3K9. H3K9me represents a specific tag for epigenetic transcriptional repression by recruiting swi6/HP1 to methylated histones which leads to transcriptional silencing within centromeric heterochromatin, telomeric regions and at the silent mating-type loci. Rik1 is involved in the RNAi-mediated targeting of ClrC to heterochromatic repeat elements. Rik1 also has a function in meiotic telomere clustering. The chain is Chromatin modification-related protein rik1 (rik1) from Schizosaccharomyces pombe (strain 972 / ATCC 24843) (Fission yeast).